Reading from the N-terminus, the 338-residue chain is ABC transporter I family member 6, chloroplastic (338 aa).

The N-terminal 66 residues, 1–66 (MAGVNLQLRH…RTTRRSVIVS (66 aa)), are a transit peptide targeting the chloroplast. The ABC transporter domain occupies 92 to 338 (LEVRDLRAVI…EKEGYKAISG (247 aa)). 126 to 133 (GKNGSGKS) lines the ATP pocket.

It belongs to the ABC transporter superfamily. ABCI family. In terms of assembly, interacts with NAP6. As to expression, present in all organs, with higher levels in aerial parts.

The protein localises to the plastid. It localises to the chloroplast. Its function is as follows. Essential protein. Required during embryo development, especially at early stages. Involved in chloroplast differentiation. This Arabidopsis thaliana (Mouse-ear cress) protein is ABC transporter I family member 6, chloroplastic (ABCI6).